The primary structure comprises 227 residues: uncharacterized protein (227 aa).

2 helical membrane passes run 7–24 (FVYA…VTWA) and 135–157 (VVVI…LMCL).

This sequence belongs to the TMEM9 family.

It localises to the membrane. This is an uncharacterized protein from Drosophila melanogaster (Fruit fly).